We begin with the raw amino-acid sequence, 280 residues long: Undecaprenyl-diphosphatase (280 aa).

8 helical membrane passes run 2–22 (FIIE…TEWL), 45–65 (AFME…VVVI), 86–106 (WQLW…GLFL), 114–134 (FYNL…FIYL), 147–167 (LASL…LALF), 188–208 (SVVT…ASGW), 223–243 (GQIF…LVVI), and 255–275 (FTIF…YAAI).

It belongs to the UppP family.

It is found in the cell membrane. The enzyme catalyses di-trans,octa-cis-undecaprenyl diphosphate + H2O = di-trans,octa-cis-undecaprenyl phosphate + phosphate + H(+). In terms of biological role, catalyzes the dephosphorylation of undecaprenyl diphosphate (UPP). Confers resistance to bacitracin. The protein is Undecaprenyl-diphosphatase of Streptococcus sanguinis (strain SK36).